The chain runs to 233 residues: 7-cyano-7-deazaguanine synthase (233 aa).

Residue Leu-17–Ala-27 coordinates ATP. Cys-196, Cys-206, Cys-209, and Cys-212 together coordinate Zn(2+).

The protein belongs to the QueC family. It depends on Zn(2+) as a cofactor.

The catalysed reaction is 7-carboxy-7-deazaguanine + NH4(+) + ATP = 7-cyano-7-deazaguanine + ADP + phosphate + H2O + H(+). The protein operates within purine metabolism; 7-cyano-7-deazaguanine biosynthesis. Its function is as follows. Catalyzes the ATP-dependent conversion of 7-carboxy-7-deazaguanine (CDG) to 7-cyano-7-deazaguanine (preQ(0)). The polypeptide is 7-cyano-7-deazaguanine synthase (Novosphingobium aromaticivorans (strain ATCC 700278 / DSM 12444 / CCUG 56034 / CIP 105152 / NBRC 16084 / F199)).